Consider the following 207-residue polypeptide: Dephospho-CoA kinase (207 aa).

Residues isoleucine 10–proline 207 enclose the DPCK domain. Glycine 18–alanine 23 lines the ATP pocket.

Belongs to the CoaE family.

It localises to the cytoplasm. The enzyme catalyses 3'-dephospho-CoA + ATP = ADP + CoA + H(+). The protein operates within cofactor biosynthesis; coenzyme A biosynthesis; CoA from (R)-pantothenate: step 5/5. Catalyzes the phosphorylation of the 3'-hydroxyl group of dephosphocoenzyme A to form coenzyme A. In Pseudomonas putida (Arthrobacter siderocapsulatus), this protein is Dephospho-CoA kinase.